The sequence spans 232 residues: Lipoprotein-releasing system ATP-binding protein LolD 2 (232 aa).

Residues 11–231 (VYLHDIKRQY…SLQDGVVVEL (221 aa)) form the ABC transporter domain. 47–54 (APSGSGKS) provides a ligand contact to ATP.

This sequence belongs to the ABC transporter superfamily. Lipoprotein translocase (TC 3.A.1.125) family. As to quaternary structure, the complex is composed of two ATP-binding proteins (LolD) and two transmembrane proteins (LolC and LolE).

Its subcellular location is the cell inner membrane. Part of the ABC transporter complex LolCDE involved in the translocation of mature outer membrane-directed lipoproteins, from the inner membrane to the periplasmic chaperone, LolA. Responsible for the formation of the LolA-lipoprotein complex in an ATP-dependent manner. The protein is Lipoprotein-releasing system ATP-binding protein LolD 2 of Rhodopseudomonas palustris (strain ATCC BAA-98 / CGA009).